A 294-amino-acid polypeptide reads, in one-letter code: MHNIFKGLITALITPFKDNKLDLYALERIVKHQIKHEVDAVLIAGSTGESSSLSFEEYKLLLQTSVEIVNKCIPIISGCSSNNTTYARALAAESTKIGVDGFMASPPSYVKPTQHGIYKHFEALHEACNLPIMLYSAPTRSGVDFSDETILRLSKLPRILALKDCGVDLERPLRIRATVKKDFNILTGNDEVVLAFNAQGGVGWTSVASNIVPNICKELLEKWNKNDTKGALEIHQKLLPLYTALFVESNPIPIKYAAHYLGLCENEIRPPLTEASDSAKKQIENIITSLSIKI.

Position 47 (T47) interacts with pyruvate. Catalysis depends on Y135, which acts as the Proton donor/acceptor. The Schiff-base intermediate with substrate role is filled by K163. Residue T205 coordinates pyruvate.

The protein belongs to the DapA family. In terms of assembly, homotetramer; dimer of dimers.

Its subcellular location is the cytoplasm. It carries out the reaction L-aspartate 4-semialdehyde + pyruvate = (2S,4S)-4-hydroxy-2,3,4,5-tetrahydrodipicolinate + H2O + H(+). Its pathway is amino-acid biosynthesis; L-lysine biosynthesis via DAP pathway; (S)-tetrahydrodipicolinate from L-aspartate: step 3/4. Functionally, catalyzes the condensation of (S)-aspartate-beta-semialdehyde [(S)-ASA] and pyruvate to 4-hydroxy-tetrahydrodipicolinate (HTPA). This is 4-hydroxy-tetrahydrodipicolinate synthase from Rickettsia conorii (strain ATCC VR-613 / Malish 7).